The sequence spans 590 residues: Auxin response factor 20 (590 aa).

Residues 126-224 (FTKVLTASDT…ELRVGIRRAR (99 aa)) constitute a DNA-binding region (TF-B3). Positions 495–576 (RTCTKVQMQG…MVKKILIYSK (82 aa)) constitute a PB1 domain.

Belongs to the ARF family. Homodimers and heterodimers.

The protein resides in the nucleus. In terms of biological role, auxin response factors (ARFs) are transcriptional factors that bind specifically to the DNA sequence 5'-TGTCTC-3' found in the auxin-responsive promoter elements (AuxREs). Could act as transcriptional activator or repressor. Formation of heterodimers with Aux/IAA proteins may alter their ability to modulate early auxin response genes expression. The protein is Auxin response factor 20 (ARF20) of Arabidopsis thaliana (Mouse-ear cress).